The chain runs to 118 residues: MARVKRGVIARARHKKILKQAKGYYGARSRVYRVAFQAVIKAGQYAYRDRRQRKRQFRQLWIARINAAARQNGLSYSRFINGLKKASVEIDRKILADIAVFDKVAFSALVEKAKAALA.

Belongs to the bacterial ribosomal protein bL20 family.

In terms of biological role, binds directly to 23S ribosomal RNA and is necessary for the in vitro assembly process of the 50S ribosomal subunit. It is not involved in the protein synthesizing functions of that subunit. This Yersinia pseudotuberculosis serotype O:1b (strain IP 31758) protein is Large ribosomal subunit protein bL20.